The sequence spans 118 residues: Large ribosomal subunit protein uL18 (118 aa).

It belongs to the universal ribosomal protein uL18 family. In terms of assembly, part of the 50S ribosomal subunit; part of the 5S rRNA/L5/L18/L25 subcomplex. Contacts the 5S and 23S rRNAs.

Its function is as follows. This is one of the proteins that bind and probably mediate the attachment of the 5S RNA into the large ribosomal subunit, where it forms part of the central protuberance. The polypeptide is Large ribosomal subunit protein uL18 (Rickettsia prowazekii (strain Madrid E)).